Consider the following 230-residue polypeptide: Thymidylate kinase (230 aa).

20-27 is a binding site for ATP; that stretch reads GGEGSGKS.

The protein belongs to the thymidylate kinase family.

The catalysed reaction is dTMP + ATP = dTDP + ADP. Functionally, phosphorylation of dTMP to form dTDP in both de novo and salvage pathways of dTTP synthesis. The protein is Thymidylate kinase of Nitrobacter winogradskyi (strain ATCC 25391 / DSM 10237 / CIP 104748 / NCIMB 11846 / Nb-255).